The primary structure comprises 173 residues: Membrane-bound hydrogenase subunit beta (173 aa).

The protein belongs to the complex I 30 kDa subunit family. In terms of assembly, the membrane-bound hydrogenase complex is composed of MbhK and MbhL, and may also contain MbhJ. Ni(2+) is required as a cofactor.

Its subcellular location is the cell membrane. It carries out the reaction H2 + 2 oxidized [2Fe-2S]-[ferredoxin] = 2 reduced [2Fe-2S]-[ferredoxin] + 2 H(+). With respect to regulation, inhibited by 0.1 mM Cu(2+). Functionally, beta subunit of a hydrogen-evolving hydrogenase that utilizes protons both as a substrate for hydrogen production and proton translocation. Acts by coupling the redox reaction via ferredoxin and iron-sulfur (Fe-S) clusters to proton translocation across the membrane thereby conserving the redox energy in a proton gradient. In Pyrococcus furiosus (strain ATCC 43587 / DSM 3638 / JCM 8422 / Vc1), this protein is Membrane-bound hydrogenase subunit beta.